The chain runs to 333 residues: Anthranilate phosphoribosyltransferase (333 aa).

Residues G81, 84–85, T89, 91–94, 109–117, and A121 contribute to the 5-phospho-alpha-D-ribose 1-diphosphate site; these read GD, NIST, and KHGNRSVSS. An anthranilate-binding site is contributed by G81. S93 contributes to the Mg(2+) binding site. Residue N112 coordinates anthranilate. Residue R167 coordinates anthranilate. Mg(2+) contacts are provided by D225 and E226.

It belongs to the anthranilate phosphoribosyltransferase family. In terms of assembly, homodimer. The cofactor is Mg(2+).

It carries out the reaction N-(5-phospho-beta-D-ribosyl)anthranilate + diphosphate = 5-phospho-alpha-D-ribose 1-diphosphate + anthranilate. Its pathway is amino-acid biosynthesis; L-tryptophan biosynthesis; L-tryptophan from chorismate: step 2/5. In terms of biological role, catalyzes the transfer of the phosphoribosyl group of 5-phosphorylribose-1-pyrophosphate (PRPP) to anthranilate to yield N-(5'-phosphoribosyl)-anthranilate (PRA). This chain is Anthranilate phosphoribosyltransferase, found in Haemophilus influenzae (strain PittGG).